A 178-amino-acid chain; its full sequence is ATP synthase subunit delta (178 aa).

Belongs to the ATPase delta chain family. In terms of assembly, F-type ATPases have 2 components, F(1) - the catalytic core - and F(0) - the membrane proton channel. F(1) has five subunits: alpha(3), beta(3), gamma(1), delta(1), epsilon(1). F(0) has three main subunits: a(1), b(2) and c(10-14). The alpha and beta chains form an alternating ring which encloses part of the gamma chain. F(1) is attached to F(0) by a central stalk formed by the gamma and epsilon chains, while a peripheral stalk is formed by the delta and b chains.

The protein localises to the cell inner membrane. F(1)F(0) ATP synthase produces ATP from ADP in the presence of a proton or sodium gradient. F-type ATPases consist of two structural domains, F(1) containing the extramembraneous catalytic core and F(0) containing the membrane proton channel, linked together by a central stalk and a peripheral stalk. During catalysis, ATP synthesis in the catalytic domain of F(1) is coupled via a rotary mechanism of the central stalk subunits to proton translocation. In terms of biological role, this protein is part of the stalk that links CF(0) to CF(1). It either transmits conformational changes from CF(0) to CF(1) or is implicated in proton conduction. The chain is ATP synthase subunit delta from Aromatoleum aromaticum (strain DSM 19018 / LMG 30748 / EbN1) (Azoarcus sp. (strain EbN1)).